The primary structure comprises 299 residues: S-fimbrial protein subunit SfaH (299 aa).

This sequence belongs to the fimbrial protein family.

The protein localises to the fimbrium. Functionally, fimbriae (also called pili), polar filaments radiating from the surface of the bacterium to a length of 0.5-1.5 micrometers and numbering 100-300 per cell, enable bacteria to colonize the epithelium of specific host organs. In terms of biological role, a minor fimbrial subunit. This protein is necessary for full expression of S-specific binding. S-fimbrial adhesins enable pathogenic E.coli causing urinary-tract infections or newborn meningitis to attach to glycoproteins terminating with alpha-sialic acid-(2-3)-beta-Gal. This is S-fimbrial protein subunit SfaH (sfaH) from Escherichia coli O6:K15:H31 (strain 536 / UPEC).